Reading from the N-terminus, the 483-residue chain is Fructose-like PTS system EIIBC component (483 aa).

Residues 1 to 105 enclose the PTS EIIB type-2 domain; that stretch reads MESSLRIVAI…IDQIFSELPT (105 aa). Catalysis depends on C13, which acts as the Phosphocysteine intermediate; for EIIB activity. C13 bears the Phosphocysteine; by EIIA mark. The 348-residue stretch at 128–475 folds into the PTS EIIC type-2 domain; it reads VMSHLMAGVS…LWLRRKAKAA (348 aa). 10 helical membrane passes run 132–152, 180–200, 204–224, 227–247, 264–284, 303–323, 344–364, 380–400, 402–422, and 442–462; these read LMAG…LVAL, IGYL…ASSI, PAFA…LLGT, GAGF…VFWF, LIPF…IGPV, MKFA…GGPI, AIVG…TFIA, IVVG…AAPL, MITA…AFGI, and VGSF…FIIV.

It is found in the cell inner membrane. The catalysed reaction is D-fructose(out) + N(pros)-phospho-L-histidyl-[protein] = D-fructose 1-phosphate(in) + L-histidyl-[protein]. In terms of biological role, the phosphoenolpyruvate-dependent sugar phosphotransferase system (sugar PTS), a major carbohydrate active transport system, catalyzes the phosphorylation of incoming sugar substrates concomitantly with their translocation across the cell membrane. The enzyme II FrvAB PTS system is involved in fructose transport. The protein is Fructose-like PTS system EIIBC component of Escherichia coli (strain K12).